A 488-amino-acid chain; its full sequence is Glutamyl-tRNA(Gln) amidotransferase subunit A (488 aa).

Active-site charge relay system residues include Lys77 and Ser152. The active-site Acyl-ester intermediate is the Ser176.

This sequence belongs to the amidase family. GatA subfamily. Heterotrimer of A, B and C subunits.

It carries out the reaction L-glutamyl-tRNA(Gln) + L-glutamine + ATP + H2O = L-glutaminyl-tRNA(Gln) + L-glutamate + ADP + phosphate + H(+). Its function is as follows. Allows the formation of correctly charged Gln-tRNA(Gln) through the transamidation of misacylated Glu-tRNA(Gln) in organisms which lack glutaminyl-tRNA synthetase. The reaction takes place in the presence of glutamine and ATP through an activated gamma-phospho-Glu-tRNA(Gln). In Streptococcus pyogenes serotype M5 (strain Manfredo), this protein is Glutamyl-tRNA(Gln) amidotransferase subunit A.